We begin with the raw amino-acid sequence, 285 residues long: Sulfotransferase 2A6 (285 aa).

Position 44 to 49 (Lys44 to Trp49) interacts with 3'-phosphoadenylyl sulfate. Catalysis depends on His99, which acts as the Proton acceptor. 3'-phosphoadenylyl sulfate-binding positions include Arg121, Ser129, Tyr184, Ser218–Met223, and Arg247–Gly249.

This sequence belongs to the sulfotransferase 1 family. In terms of assembly, oligomer.

It localises to the cytoplasm. The protein localises to the cytosol. It catalyses the reaction an alcohol + 3'-phosphoadenylyl sulfate = an alkyl sulfate + adenosine 3',5'-bisphosphate + H(+). The catalysed reaction is glycolithocholate + 3'-phosphoadenylyl sulfate = sulfoglycolithocholate + adenosine 3',5'-bisphosphate + H(+). The enzyme catalyses taurolithocholate + 3'-phosphoadenylyl sulfate = taurolithocholate 3-sulfate + adenosine 3',5'-bisphosphate + H(+). It carries out the reaction 3beta-hydroxyandrost-5-en-17-one + 3'-phosphoadenylyl sulfate = dehydroepiandrosterone 3-sulfate + adenosine 3',5'-bisphosphate + H(+). Sulfotransferase that utilizes 3'-phospho-5'-adenylyl sulfate (PAPS) as sulfonate donor to catalyze the sulfonation of the hydroxyl group of hydroxysteroids and bile acids. The polypeptide is Sulfotransferase 2A6 (Mus musculus (Mouse)).